Reading from the N-terminus, the 514-residue chain is Serine--tRNA ligase, cytoplasmic (514 aa).

The residue at position 1 (Met1) is an N-acetylmethionine. An interaction with tRNA region spans residues 9–61 (RVDKGGDPALIRESQEKRFKDPGLVDQLVKADSEWRRCRFRADNLNKLKNLCS). Position 241 is a phosphoserine (Ser241). Residues Thr271 and Arg302 each contribute to the L-serine site. ATP-binding positions include 302-304 (RQE) and 318-321 (VHQF). Lys323 carries the N6-acetyllysine modification. Residue Glu325 participates in L-serine binding. 391-394 (ELVS) lines the ATP pocket. Asn427 lines the L-serine pocket. The disordered stretch occupies residues 475 to 514 (PIDQEPSKKQKKQHEGSKKKGAARDVALESQLQNMEVTDA). The span at 479 to 501 (EPSKKQKKQHEGSKKKGAARDVA) shows a compositional bias: basic and acidic residues. Positions 482–494 (KKQKKQHEGSKKK) match the Nuclear localization signal motif. The segment covering 504 to 514 (SQLQNMEVTDA) has biased composition (polar residues).

It belongs to the class-II aminoacyl-tRNA synthetase family. Type-1 seryl-tRNA synthetase subfamily. As to quaternary structure, homodimer. The tRNA molecule may bind across the dimer. Interacts with SIRT2. Interacts with METTL6; interaction is required for the tRNA N(3)-methylcytidine methyltransferase activity of METTL6.

The protein resides in the cytoplasm. It is found in the nucleus. It carries out the reaction tRNA(Ser) + L-serine + ATP = L-seryl-tRNA(Ser) + AMP + diphosphate + H(+). The catalysed reaction is tRNA(Sec) + L-serine + ATP = L-seryl-tRNA(Sec) + AMP + diphosphate + H(+). It participates in aminoacyl-tRNA biosynthesis; selenocysteinyl-tRNA(Sec) biosynthesis; L-seryl-tRNA(Sec) from L-serine and tRNA(Sec): step 1/1. Its function is as follows. Catalyzes the attachment of serine to tRNA(Ser) in a two-step reaction: serine is first activated by ATP to form Ser-AMP and then transferred to the acceptor end of tRNA(Ser). Is probably also able to aminoacylate tRNA(Sec) with serine, to form the misacylated tRNA L-seryl-tRNA(Sec), which will be further converted into selenocysteinyl-tRNA(Sec). In the nucleus, binds to the VEGFA core promoter and prevents MYC binding and transcriptional activation by MYC. Recruits SIRT2 to the VEGFA promoter, promoting deacetylation of histone H4 at 'Lys-16' (H4K16). Thereby, inhibits the production of VEGFA and sprouting angiogenesis mediated by VEGFA. In Bos taurus (Bovine), this protein is Serine--tRNA ligase, cytoplasmic (SARS1).